A 619-amino-acid polypeptide reads, in one-letter code: Probable Xaa-Pro aminopeptidase P (619 aa).

Mn(2+) is bound by residues D415, D426, E524, and E538.

The protein belongs to the peptidase M24B family. Requires Mn(2+) as cofactor.

The enzyme catalyses Release of any N-terminal amino acid, including proline, that is linked to proline, even from a dipeptide or tripeptide.. In terms of biological role, catalyzes the removal of a penultimate prolyl residue from the N-termini of peptides. The polypeptide is Probable Xaa-Pro aminopeptidase P (AMPP) (Fusarium vanettenii (strain ATCC MYA-4622 / CBS 123669 / FGSC 9596 / NRRL 45880 / 77-13-4) (Fusarium solani subsp. pisi)).